Reading from the N-terminus, the 192-residue chain is Probable cobalt-precorrin-6B C(15)-methyltransferase (decarboxylating) (192 aa).

Residues threonine 17, 41–45, aspartate 62, and alanine 91 contribute to the S-adenosyl-L-methionine site; that span reads GCGTG.

This sequence belongs to the methyltransferase superfamily. Archaeal-type CbiT family. As to quaternary structure, homotetramer.

The catalysed reaction is Co-precorrin-6B + S-adenosyl-L-methionine = Co-precorrin-7 + S-adenosyl-L-homocysteine + CO2. It participates in cofactor biosynthesis; adenosylcobalamin biosynthesis; cob(II)yrinate a,c-diamide from sirohydrochlorin (anaerobic route): step 8/10. Catalyzes the methylation of C-15 in cobalt-precorrin-6B followed by the decarboxylation of C-12 to form cobalt-precorrin-7. The polypeptide is Probable cobalt-precorrin-6B C(15)-methyltransferase (decarboxylating) (Methanothermobacter thermautotrophicus (strain ATCC 29096 / DSM 1053 / JCM 10044 / NBRC 100330 / Delta H) (Methanobacterium thermoautotrophicum)).